The sequence spans 266 residues: Hydroxyethylthiazole kinase (266 aa).

M43 contributes to the substrate binding site. ATP is bound by residues R119 and T166. Position 193 (G193) interacts with substrate.

This sequence belongs to the Thz kinase family. It depends on Mg(2+) as a cofactor.

It catalyses the reaction 5-(2-hydroxyethyl)-4-methylthiazole + ATP = 4-methyl-5-(2-phosphooxyethyl)-thiazole + ADP + H(+). The protein operates within cofactor biosynthesis; thiamine diphosphate biosynthesis; 4-methyl-5-(2-phosphoethyl)-thiazole from 5-(2-hydroxyethyl)-4-methylthiazole: step 1/1. Functionally, catalyzes the phosphorylation of the hydroxyl group of 4-methyl-5-beta-hydroxyethylthiazole (THZ). The protein is Hydroxyethylthiazole kinase of Methanococcus maripaludis (strain C5 / ATCC BAA-1333).